Here is a 129-residue protein sequence, read N- to C-terminus: Large ribosomal subunit protein bL17 (129 aa).

This sequence belongs to the bacterial ribosomal protein bL17 family. Part of the 50S ribosomal subunit. Contacts protein L32.

In Acidovorax ebreus (strain TPSY) (Diaphorobacter sp. (strain TPSY)), this protein is Large ribosomal subunit protein bL17.